Here is a 1651-residue protein sequence, read N- to C-terminus: Roundabout homolog 1 (1651 aa).

The signal sequence occupies residues 1–25 (MKWKHLPLLVMISLLTLSKKHLLLA). Topologically, residues 26 to 897 (QLIPDPEDLE…QQISDVVKQP (872 aa)) are extracellular. The segment at 31–66 (PEDLERGNDNGTPAPTSDNDDNSLGYTGSRLRQEDF) is disordered. The span at 39–56 (DNGTPAPTSDNDDNSLGY) shows a compositional bias: polar residues. Ig-like C2-type domains follow at residues 68-164 (PRIV…ASLE), 170-257 (DDFR…ADVT), 262-346 (PSFV…ATLT), 351-446 (PHFV…LEVT), and 455-541 (PVIR…AYIE). Cysteine 89 and cysteine 147 are disulfide-bonded. N-linked (GlcNAc...) asparagine glycosylation occurs at asparagine 160. 3 disulfide bridges follow: cysteine 191/cysteine 240, cysteine 283/cysteine 330, and cysteine 372/cysteine 428. N-linked (GlcNAc...) asparagine glycosylation occurs at asparagine 463. Cysteine 476 and cysteine 525 are joined by a disulfide. 3 consecutive Fibronectin type-III domains span residues 563–657 (APSK…TQDV), 676–773 (VVLH…TLEE), and 778–874 (PPRS…LDSH). N-linked (GlcNAc...) asparagine glycans are attached at residues asparagine 790, asparagine 820, and asparagine 827. The chain crosses the membrane as a helical span at residues 898–918 (AFIAGIGAACWIILMVFSIWL). Topologically, residues 919–1651 (YRHRKKRNGL…NNEELEETES (733 aa)) are cytoplasmic. Serine 940 carries the phosphoserine modification. Phosphothreonine is present on threonine 948. Tyrosine 1038 carries the phosphotyrosine modification. Serine 1055 carries the phosphoserine modification. At tyrosine 1073 the chain carries Phosphotyrosine. A disordered region spans residues 1086-1107 (NMNNGGGDSSEKHWKPPGQQKQ). Residue tyrosine 1114 is modified to Phosphotyrosine. Disordered stretches follow at residues 1137-1337 (PYNH…ADME), 1352-1397 (EQTP…DGSF), and 1420-1651 (RRQM…ETES). The segment covering 1147 to 1163 (GGSYNSSDRGSSTSGSQ) has biased composition (low complexity). Positions 1186–1196 (LPPPPAHPPPH) are enriched in pro residues. Threonine 1240 bears the Phosphothreonine mark. Residues 1255 to 1269 (YSHQSTATLTPSPQE) show a composition bias toward polar residues. A compositionally biased stretch (basic and acidic residues) spans 1281 to 1293 (DLGHMPHPPDRRR). Residues 1296 to 1307 (VSPPPPPRPISP) show a composition bias toward pro residues. At serine 1297 the chain carries Phosphoserine. Acidic residues predominate over residues 1322 to 1336 (MDTDAPEEEEDEADM). The span at 1384-1397 (SSGRSSVSSSDGSF) shows a compositional bias: low complexity. Residues 1438-1451 (PRPTSPVSTDSNMS) show a composition bias toward polar residues. The span at 1459–1470 (RPTKKQKHQPGH) shows a compositional bias: basic residues. The segment covering 1480 to 1490 (LPPPPVPPPAI) has biased composition (pro residues). 2 stretches are compositionally biased toward basic and acidic residues: residues 1516-1541 (ARAD…RQVT) and 1549-1573 (DPRE…RDLP). Residues 1592–1601 (FPTSNNPRDP) show a composition bias toward polar residues. Residues 1602 to 1614 (SSSSSMSSRGSGS) are compositionally biased toward low complexity. Residues 1642–1651 (NNEELEETES) show a composition bias toward acidic residues.

It belongs to the immunoglobulin superfamily. ROBO family. As to quaternary structure, homodimer. Dimerization is mediated by the extracellular domain and is independent of SLIT liganding. Interacts with SLIT1. Interacts with SLIT2. Interacts with FLRT3. Interacts with MYO9B (via Rho-GAP domain). Ubiquitinated. May be deubiquitinated by USP33. In terms of tissue distribution, expressed in embryonal brain and spinal cord.

The protein resides in the cell membrane. It is found in the cell projection. It localises to the axon. Its subcellular location is the endoplasmic reticulum-Golgi intermediate compartment membrane. Its function is as follows. Receptor for SLIT1 and SLIT2 that mediates cellular responses to molecular guidance cues in cellular migration, including axonal navigation at the ventral midline of the neural tube and projection of axons to different regions during neuronal development. Interaction with the intracellular domain of FLRT3 mediates axon attraction towards cells expressing NTN1. In axon growth cones, the silencing of the attractive effect of NTN1 by SLIT2 may require the formation of a ROBO1-DCC complex. Plays a role in the regulation of cell migration via its interaction with MYO9B; inhibits MYO9B-mediated stimulation of RHOA GTPase activity, and thereby leads to increased levels of active, GTP-bound RHOA. May be required for lung development. The polypeptide is Roundabout homolog 1 (Robo1) (Rattus norvegicus (Rat)).